Here is a 1273-residue protein sequence, read N- to C-terminus: Clustered mitochondria protein homolog (1273 aa).

Positions 344–599 constitute a Clu domain; it reads PANNADYSRM…NTYPLDVKFA (256 aa). TPR repeat units lie at residues 981-1013, 1022-1055, and 1151-1184; these read SDQK…KEEV, AEKY…YERV, and ATLE…FTRE. Disordered regions lie at residues 1217–1242 and 1254–1273; these read AEQA…KAEL and IEGG…KGKK. Residues 1262–1273 are compositionally biased toward basic residues; that stretch reads SKKKSSKKKGKK.

The protein belongs to the CLU family. As to quaternary structure, may associate with the eukaryotic translation initiation factor 3 (eIF-3) complex.

Its subcellular location is the cytoplasm. Functionally, mRNA-binding protein involved in proper cytoplasmic distribution of mitochondria. This Vanderwaltozyma polyspora (strain ATCC 22028 / DSM 70294 / BCRC 21397 / CBS 2163 / NBRC 10782 / NRRL Y-8283 / UCD 57-17) (Kluyveromyces polysporus) protein is Clustered mitochondria protein homolog.